Here is an 89-residue protein sequence, read N- to C-terminus: Protein WFDC9 (89 aa).

An N-terminal signal peptide occupies residues 1–23 (MKPWILLLVMFISGVVMLLPVLG).

The protein resides in the secreted. This chain is Protein WFDC9 (WFDC9), found in Homo sapiens (Human).